A 313-amino-acid polypeptide reads, in one-letter code: Phosphoenolpyruvate phosphomutase (313 aa).

Residues 1 to 23 (MNATERPGSDGTGSPESVGSRLK) are disordered. Catalysis depends on aspartate 69, which acts as the Nucleophile.

The protein belongs to the isocitrate lyase/PEP mutase superfamily. PEP mutase family.

The catalysed reaction is phosphoenolpyruvate + H(+) = 3-phosphonopyruvate. The protein operates within secondary metabolite biosynthesis; bialaphos biosynthesis. In terms of biological role, formation of a carbon-phosphorus bond by converting phosphoenolpyruvate (PEP) to phosphonopyruvate (P-Pyr). This Streptomyces viridochromogenes (strain DSM 40736 / JCM 4977 / BCRC 1201 / Tue 494) protein is Phosphoenolpyruvate phosphomutase (ppm).